Consider the following 356-residue polypeptide: Sensor protein BasS (356 aa).

Residues 1-13 (MRFQRRAMTLRQR) are Cytoplasmic-facing. The chain crosses the membrane as a helical span at residues 14-34 (LMLTIGLILLVFQLISTFWLW). The Periplasmic segment spans residues 35 to 64 (HESTEQIQLFEQALRDNRNNDRHIMHEIRE). The helical transmembrane segment at 65 to 88 (AVASLIVPGVFMVSLTLLICYQAV) threads the bilayer. An HAMP domain is found at 89–141 (RRITRPLAELQKELEARTADNLAPIAIHSSTLEIESVVSAINQLVTRLTTTLD). Topologically, residues 89–356 (RRITRPLAEL…TRAWVLLKKA (268 aa)) are cytoplasmic. The Histidine kinase domain occupies 149 to 356 (DVAHELRTPL…TRAWVLLKKA (208 aa)). The residue at position 152 (histidine 152) is a Phosphohistidine; by autocatalysis.

Autophosphorylated.

The protein resides in the cell inner membrane. The enzyme catalyses ATP + protein L-histidine = ADP + protein N-phospho-L-histidine.. Member of the two-component regulatory system BasS/BasR. Autophosphorylates and activates BasR by phosphorylation. Plays a role in the adaptation of the organism to the host environment, in particular to neutrophils, and therefore it plays a role in virulence as well. The polypeptide is Sensor protein BasS (basS) (Salmonella typhimurium (strain LT2 / SGSC1412 / ATCC 700720)).